Reading from the N-terminus, the 658-residue chain is UvrABC system protein C (658 aa).

A GIY-YIG domain is found at 62–140; that stretch reads PKPGVYRMLD…IKRFRPPYNV (79 aa). One can recognise a UVR domain in the interval 250 to 285; the sequence is GAVQREIEAQMHKAAEDLDFERAAMLRDRLRAATFI.

Belongs to the UvrC family. In terms of assembly, interacts with UvrB in an incision complex.

It is found in the cytoplasm. In terms of biological role, the UvrABC repair system catalyzes the recognition and processing of DNA lesions. UvrC both incises the 5' and 3' sides of the lesion. The N-terminal half is responsible for the 3' incision and the C-terminal half is responsible for the 5' incision. The polypeptide is UvrABC system protein C (Novosphingobium aromaticivorans (strain ATCC 700278 / DSM 12444 / CCUG 56034 / CIP 105152 / NBRC 16084 / F199)).